Reading from the N-terminus, the 130-residue chain is Small ribosomal subunit protein uS9 (130 aa).

Residues 109–130 are disordered; sequence RMKERKKYGLKKARRAPQFSKR. The span at 111–130 shows a compositional bias: basic residues; the sequence is KERKKYGLKKARRAPQFSKR.

Belongs to the universal ribosomal protein uS9 family.

This chain is Small ribosomal subunit protein uS9, found in Clostridium kluyveri (strain NBRC 12016).